A 504-amino-acid polypeptide reads, in one-letter code: L-carnitine/gamma-butyrobetaine antiporter (504 aa).

Transmembrane regions (helical) follow at residues 8-28, 51-71, 92-112, 143-163, 195-215, 231-251, 263-283, 315-335, 347-367, 403-423, 446-466, and 475-495; these read AGIEPKVFFPPLIIVGILCWL, WGWAFEWYMVIMFGGWFWLVF, IFMMFASCTSAAVLFWGSIEI, GPLPWATYSFLSVAFAYFFFV, FYLVALILAMGTSLGLATPLV, LDAIIISCWILLNAICVAFGL, TYLSFLMLGWVFIVGGASFIV, AWTVFYWAWWVIYAIQMSIFL, LCLGMVSGLTAGTWLIWTYSG, LSTATMWGFFILCFIATVTLI, LLVRIGWSVLVGIIGIILLAL, and AIIAGGCPLFFVNIMVTLSFI.

Belongs to the BCCT transporter (TC 2.A.15) family. CaiT subfamily. Homotrimer.

The protein resides in the cell inner membrane. It catalyses the reaction 4-(trimethylamino)butanoate(in) + (R)-carnitine(out) = 4-(trimethylamino)butanoate(out) + (R)-carnitine(in). Its pathway is amine and polyamine metabolism; carnitine metabolism. Catalyzes the exchange of L-carnitine for gamma-butyrobetaine. The chain is L-carnitine/gamma-butyrobetaine antiporter from Proteus sp. (strain LE138).